A 164-amino-acid polypeptide reads, in one-letter code: MPELLKQRVETCYQQAETFFKRPFPRPEVSFKLRGQKAGVAHLHENLLRFNLQLYRENQEDFLRQTVAHEVAHLVAHQLFGDRIQAHGEEWQLIMRGVYELPPNRCHNYEVQRRVATRYIYRCPCPQGEFAFTAQRHKLVRQGRRYLCKRCRETLVYSGETRVE.

The region spanning 14 to 156 is the SprT-like domain; it reads QQAETFFKRP…LCKRCRETLV (143 aa). Histidine 69 serves as a coordination point for Zn(2+). Glutamate 70 is a catalytic residue. Zn(2+) is bound at residue histidine 73.

This sequence belongs to the SprT family. The cofactor is Zn(2+).

The protein localises to the cytoplasm. This Pseudomonas putida (strain W619) protein is Protein SprT.